Consider the following 399-residue polypeptide: Ectoine hydrolase (399 aa).

It belongs to the peptidase M24 family.

It localises to the cytoplasm. It catalyses the reaction L-ectoine + H2O = (2S)-2-acetamido-4-aminobutanoate. Its function is as follows. Involved in the degradation of ectoine, which allows H.elongata to utilize ectoine as both a carbon and a nitrogen source for growth. Catalyzes the hydrolysis of ectoine to N-acetyl-L-2,4-diaminobutyric acid (N-Ac-DABA). It can produce both isoforms N-gamma-acetyl-L-2,4-diaminobutyric acid (N-gamma-Ac-DABA) and N-alpha-acetyl-L-2,4-diaminobutyric acid (-Nalpha-Ac-DABA), however N-alpha-Ac-DABA is the essential substrate for the subsequent catabolic enzyme DoeB. In Halomonas elongata (strain ATCC 33173 / DSM 2581 / NBRC 15536 / NCIMB 2198 / 1H9), this protein is Ectoine hydrolase.